The following is a 30-amino-acid chain: Cycloviolacin-O18 (30 aa).

Residues 1 to 30 (GIPCGESCVYIPCTVTALAGCKCKSKVCYN) constitute a cross-link (cyclopeptide (Gly-Asn)). 3 disulfides stabilise this stretch: Cys4/Cys21, Cys8/Cys23, and Cys13/Cys28.

In terms of processing, this is a cyclic peptide. Expressed in leaves, petals and petioles but not in roots and runners (at protein level).

Probably participates in a plant defense mechanism. The sequence is that of Cycloviolacin-O18 from Viola odorata (Sweet violet).